The primary structure comprises 622 residues: Polypeptide N-acetylgalactosaminyltransferase 6 (622 aa).

At 1–8 (MRLLRRRH) the chain is on the cytoplasmic side. A helical; Signal-anchor for type II membrane protein membrane pass occupies residues 9–28 (MPLRLAMVGCAFVLFLFLLH). Over 29–622 (RDVSSREEAT…SDPHQLWLFV (594 aa)) the chain is Lumenal. The N-linked (GlcNAc...) asparagine glycan is linked to asparagine 86. Intrachain disulfides connect cysteine 165-cysteine 402 and cysteine 393-cysteine 474. Positions 176-285 (LATTSVIIVF…HGWLEPLLAR (110 aa)) are catalytic subdomain A. Positions 269, 271, and 407 each coordinate Mn(2+). The catalytic subdomain B stretch occupies residues 348–410 (PIKSPTFAGG…PCSVVGHVFR (63 aa)). N-linked (GlcNAc...) asparagine glycosylation is present at asparagine 476. One can recognise a Ricin B-type lectin domain in the interval 506–622 (TNQCLDVGEN…SDPHQLWLFV (117 aa)). Cysteine 509 and cysteine 527 are oxidised to a cystine. Positions 511, 514, 528, and 533 each coordinate UDP-N-acetyl-alpha-D-galactosamine. Cystine bridges form between cysteine 553-cysteine 566 and cysteine 597-cysteine 610.

This sequence belongs to the glycosyltransferase 2 family. GalNAc-T subfamily. The cofactor is Mn(2+). In terms of tissue distribution, expressed in placenta and trachea. Weakly expressed in brain and pancreas. Expressed in fibroblast. Weakly or not expressed in lung, liver, muscle, kidney, spleen, thymus, prostate, testis, ovary, intestine, colon, leukocyte, stomach, thyroid, spinal cord, lymph node, trachea, adrenal gland and bone marrow.

The protein localises to the golgi apparatus membrane. The catalysed reaction is L-seryl-[protein] + UDP-N-acetyl-alpha-D-galactosamine = a 3-O-[N-acetyl-alpha-D-galactosaminyl]-L-seryl-[protein] + UDP + H(+). It carries out the reaction L-threonyl-[protein] + UDP-N-acetyl-alpha-D-galactosamine = a 3-O-[N-acetyl-alpha-D-galactosaminyl]-L-threonyl-[protein] + UDP + H(+). It functions in the pathway protein modification; protein glycosylation. In terms of biological role, catalyzes the initial reaction in O-linked oligosaccharide biosynthesis, the transfer of an N-acetyl-D-galactosamine residue to a serine or threonine residue on the protein receptor. May participate in synthesis of oncofetal fibronectin. Has activity toward MUC1A, MUC2, EA2 and fibronectin peptides. Glycosylates FGF23. This is Polypeptide N-acetylgalactosaminyltransferase 6 (GALNT6) from Homo sapiens (Human).